A 191-amino-acid chain; its full sequence is Divergent paired-related homeobox (191 aa).

The segment covering 1–15 (MPGSEDLRKGKDQMH) has biased composition (basic and acidic residues). The interval 1–20 (MPGSEDLRKGKDQMHSHRKR) is disordered. The segment at residues 16–75 (SHRKRTMFTKKQLEDLNILFNENPYPNPSLQKEMASKIDIHPTVLQVWFKNHRAKLKKAK) is a DNA-binding region (homeobox).

It belongs to the paired homeobox family.

Its subcellular location is the nucleus. Functionally, transcription factor that acts as a repressor. In Homo sapiens (Human), this protein is Divergent paired-related homeobox.